A 376-amino-acid chain; its full sequence is Queuine tRNA-ribosyltransferase (376 aa).

Asp-90 functions as the Proton acceptor in the catalytic mechanism. Substrate-binding positions include Asp-90–Phe-94, Asp-144, Gln-193, and Gly-220. An RNA binding region spans residues Gly-251–Asp-257. Residue Asp-270 is the Nucleophile of the active site. The segment at Thr-275–Arg-279 is RNA binding; important for wobble base 34 recognition. Zn(2+) is bound by residues Cys-308, Cys-310, Cys-313, and His-339.

This sequence belongs to the queuine tRNA-ribosyltransferase family. Homodimer. Within each dimer, one monomer is responsible for RNA recognition and catalysis, while the other monomer binds to the replacement base PreQ1. Zn(2+) is required as a cofactor.

The enzyme catalyses 7-aminomethyl-7-carbaguanine + guanosine(34) in tRNA = 7-aminomethyl-7-carbaguanosine(34) in tRNA + guanine. It participates in tRNA modification; tRNA-queuosine biosynthesis. Functionally, catalyzes the base-exchange of a guanine (G) residue with the queuine precursor 7-aminomethyl-7-deazaguanine (PreQ1) at position 34 (anticodon wobble position) in tRNAs with GU(N) anticodons (tRNA-Asp, -Asn, -His and -Tyr). Catalysis occurs through a double-displacement mechanism. The nucleophile active site attacks the C1' of nucleotide 34 to detach the guanine base from the RNA, forming a covalent enzyme-RNA intermediate. The proton acceptor active site deprotonates the incoming PreQ1, allowing a nucleophilic attack on the C1' of the ribose to form the product. After dissociation, two additional enzymatic reactions on the tRNA convert PreQ1 to queuine (Q), resulting in the hypermodified nucleoside queuosine (7-(((4,5-cis-dihydroxy-2-cyclopenten-1-yl)amino)methyl)-7-deazaguanosine). This Cupriavidus necator (strain ATCC 17699 / DSM 428 / KCTC 22496 / NCIMB 10442 / H16 / Stanier 337) (Ralstonia eutropha) protein is Queuine tRNA-ribosyltransferase.